A 562-amino-acid chain; its full sequence is Glutamate--tRNA ligase (562 aa).

The 'HIGH' region motif lies at 90-100 (PNPSGLLHIGH).

This sequence belongs to the class-I aminoacyl-tRNA synthetase family. Glutamate--tRNA ligase type 2 subfamily.

The protein resides in the cytoplasm. The catalysed reaction is tRNA(Glu) + L-glutamate + ATP = L-glutamyl-tRNA(Glu) + AMP + diphosphate. In terms of biological role, catalyzes the attachment of glutamate to tRNA(Glu) in a two-step reaction: glutamate is first activated by ATP to form Glu-AMP and then transferred to the acceptor end of tRNA(Glu). The sequence is that of Glutamate--tRNA ligase from Nanoarchaeum equitans (strain Kin4-M).